The sequence spans 436 residues: Histidine--tRNA ligase (436 aa).

It belongs to the class-II aminoacyl-tRNA synthetase family. Homodimer.

It localises to the cytoplasm. It catalyses the reaction tRNA(His) + L-histidine + ATP = L-histidyl-tRNA(His) + AMP + diphosphate + H(+). The polypeptide is Histidine--tRNA ligase (Prochlorococcus marinus (strain MIT 9303)).